The sequence spans 153 residues: Movement protein (153 aa).

Disordered regions lie at residues 1–24 (MAQE…EQDP) and 121–153 (PWVA…RNQR). The segment covering 121–138 (PWVATLIPSQSAGPPQRS) has biased composition (polar residues).

It belongs to the luteoviruses movement protein family.

In terms of biological role, transports viral genome to neighboring plant cells directly through plasmosdesmata, without any budding. The movement protein allows efficient cell to cell propagation, by bypassing the host cell wall barrier. The protein is Movement protein of Avena byzantina (Oat).